Here is a 304-residue protein sequence, read N- to C-terminus: Sulfate adenylyltransferase subunit 2 2 (304 aa).

This sequence belongs to the PAPS reductase family. CysD subfamily. As to quaternary structure, heterodimer composed of CysD, the smaller subunit, and CysN.

It carries out the reaction sulfate + ATP + H(+) = adenosine 5'-phosphosulfate + diphosphate. It participates in sulfur metabolism; hydrogen sulfide biosynthesis; sulfite from sulfate: step 1/3. In terms of biological role, with CysN forms the ATP sulfurylase (ATPS) that catalyzes the adenylation of sulfate producing adenosine 5'-phosphosulfate (APS) and diphosphate, the first enzymatic step in sulfur assimilation pathway. APS synthesis involves the formation of a high-energy phosphoric-sulfuric acid anhydride bond driven by GTP hydrolysis by CysN coupled to ATP hydrolysis by CysD. This Marinobacter nauticus (strain ATCC 700491 / DSM 11845 / VT8) (Marinobacter aquaeolei) protein is Sulfate adenylyltransferase subunit 2 2.